The sequence spans 59 residues: Large ribosomal subunit protein bL32 (59 aa).

The disordered stretch occupies residues 1 to 59 (MAVQQNKKSPSKRGMHRSHDFLTTSPLAVEPSTGEVHLRHHISPNGYYRGKKVVKTKND). The segment covering 49 to 59 (RGKKVVKTKND) has biased composition (basic residues).

The protein belongs to the bacterial ribosomal protein bL32 family.

The chain is Large ribosomal subunit protein bL32 from Burkholderia mallei (strain NCTC 10247).